Here is a 370-residue protein sequence, read N- to C-terminus: DNA replication and repair protein RecF (370 aa).

ATP is bound at residue 30–37 (GENAQGKT).

It belongs to the RecF family.

The protein resides in the cytoplasm. In terms of biological role, the RecF protein is involved in DNA metabolism; it is required for DNA replication and normal SOS inducibility. RecF binds preferentially to single-stranded, linear DNA. It also seems to bind ATP. This Listeria innocua serovar 6a (strain ATCC BAA-680 / CLIP 11262) protein is DNA replication and repair protein RecF.